The sequence spans 417 residues: Serine hydroxymethyltransferase (417 aa).

Residues L121 and G125 to L127 contribute to the (6S)-5,6,7,8-tetrahydrofolate site. Residue K229 is modified to N6-(pyridoxal phosphate)lysine. S355–F357 lines the (6S)-5,6,7,8-tetrahydrofolate pocket.

Belongs to the SHMT family. In terms of assembly, homodimer. Requires pyridoxal 5'-phosphate as cofactor.

The protein localises to the cytoplasm. It catalyses the reaction (6R)-5,10-methylene-5,6,7,8-tetrahydrofolate + glycine + H2O = (6S)-5,6,7,8-tetrahydrofolate + L-serine. The protein operates within one-carbon metabolism; tetrahydrofolate interconversion. It participates in amino-acid biosynthesis; glycine biosynthesis; glycine from L-serine: step 1/1. Its function is as follows. Catalyzes the reversible interconversion of serine and glycine with tetrahydrofolate (THF) serving as the one-carbon carrier. This reaction serves as the major source of one-carbon groups required for the biosynthesis of purines, thymidylate, methionine, and other important biomolecules. Also exhibits THF-independent aldolase activity toward beta-hydroxyamino acids, producing glycine and aldehydes, via a retro-aldol mechanism. The chain is Serine hydroxymethyltransferase from Photorhabdus laumondii subsp. laumondii (strain DSM 15139 / CIP 105565 / TT01) (Photorhabdus luminescens subsp. laumondii).